Reading from the N-terminus, the 313-residue chain is Ubiquinone biosynthesis protein COQ4, mitochondrial (313 aa).

Positions 197, 198, 201, and 213 each coordinate Zn(2+). The segment at 290 to 313 (QPPDLRELRRKQKKLPEPERENAN) is disordered. Over residues 303-313 (KLPEPERENAN) the composition is skewed to basic and acidic residues.

The protein belongs to the COQ4 family. As to quaternary structure, component of a multi-subunit COQ enzyme complex, composed of at least COQ3, COQ4, COQ5, COQ6, COQ7 and COQ9. Zn(2+) is required as a cofactor.

Its subcellular location is the mitochondrion inner membrane. The catalysed reaction is a 4-hydroxy-3-methoxy-5-(all-trans-polyprenyl)benzoate + H(+) = a 2-methoxy-6-(all-trans-polyprenyl)phenol + CO2. Its pathway is cofactor biosynthesis; ubiquinone biosynthesis. In terms of biological role, lyase that catalyzes the C1-decarboxylation of 4-hydroxy-3-methoxy-5-(all-trans-polyprenyl)benzoic acid into 2-methoxy-6-(all-trans-polyprenyl)phenol during ubiquinone biosynthesis. The polypeptide is Ubiquinone biosynthesis protein COQ4, mitochondrial (Meyerozyma guilliermondii (strain ATCC 6260 / CBS 566 / DSM 6381 / JCM 1539 / NBRC 10279 / NRRL Y-324) (Yeast)).